Consider the following 153-residue polypeptide: Methylglyoxal synthase (153 aa).

Residues 6 to 153 form the MGS-like domain; that stretch reads RTIAARKHIA…QRYLAERLPS (148 aa). Residues His-19, Lys-23, 45-48, and 65-66 contribute to the substrate site; these read TGTT and SG. Asp-71 functions as the Proton donor/acceptor in the catalytic mechanism. His-98 serves as a coordination point for substrate.

Belongs to the methylglyoxal synthase family.

The enzyme catalyses dihydroxyacetone phosphate = methylglyoxal + phosphate. Catalyzes the formation of methylglyoxal from dihydroxyacetone phosphate. The chain is Methylglyoxal synthase from Sodalis glossinidius (strain morsitans).